The primary structure comprises 37 residues: Cytochrome b6-f complex subunit 5 (37 aa).

A helical transmembrane segment spans residues 5–25 (LLSGIVLGLITVSALGLFVAA).

Belongs to the PetG family. The 4 large subunits of the cytochrome b6-f complex are cytochrome b6, subunit IV (17 kDa polypeptide, PetD), cytochrome f and the Rieske protein, while the 4 small subunits are PetG, PetL, PetM and PetN. The complex functions as a dimer.

It is found in the plastid. The protein localises to the chloroplast thylakoid membrane. Component of the cytochrome b6-f complex, which mediates electron transfer between photosystem II (PSII) and photosystem I (PSI), cyclic electron flow around PSI, and state transitions. PetG is required for either the stability or assembly of the cytochrome b6-f complex. The chain is Cytochrome b6-f complex subunit 5 from Phaeodactylum tricornutum (strain CCAP 1055/1).